A 199-amino-acid chain; its full sequence is V-set and transmembrane domain-containing protein 5 (199 aa).

A signal peptide spans 1–27 (MRPLRCGERTQGIPLGLLAFWVTAARC). The Extracellular portion of the chain corresponds to 28 to 146 (LQSQGVSLYI…VSEIRYEDLH (119 aa)). One can recognise an Ig-like C2-type domain in the interval 35 to 138 (LYIPQSAINA…QSGTILLRVS (104 aa)). N-linked (GlcNAc...) asparagine glycans are attached at residues Asn43, Asn87, and Asn101. Residues 147–167 (FVAVFFALLAAVAVVLISLMW) form a helical membrane-spanning segment. Residues 168-199 (VCNQCAYKFQRKRRYKLKESTTEEIEMKEVEC) lie on the Cytoplasmic side of the membrane. Residues 169-185 (CNQCAYKFQRKRRYKLK) form an important for CDC42-dependent filopodia induction region.

Can homooligomerize through cis interactions within the same cell membrane. In terms of processing, N-glycosylated. In terms of tissue distribution, highly expressed in the central nervous system (CNS), with the highest expression in thalamus, hippocampus, cerebrum, midbrain and spinal cord. Also highly expressed in stomach, kidney and small intestine.

It localises to the cell membrane. The protein resides in the cell projection. Its subcellular location is the dendrite. The protein localises to the axon. Cell adhesion-like membrane protein of the central nervous system (CNS) which modulates both the position and complexity of central neurons by altering their membrane morphology and dynamics. Involved in the formation of neuronal dendrites and protrusions including dendritic filopodia. In synaptogenesis, regulates synapse formation by altering dendritic spine morphology and actin distribution. Promotes formation of unstable neuronal spines such as thin and branched types. Regulates neuronal morphogenesis and migration during cortical development in the brain. The polypeptide is V-set and transmembrane domain-containing protein 5 (Mus musculus (Mouse)).